A 173-amino-acid polypeptide reads, in one-letter code: Transmembrane protein 240 (173 aa).

2 helical membrane passes run 5–25 and 90–110; these read ANTM…ACLM and LMLG…MDGV. Residue serine 169 is modified to Phosphoserine.

It is found in the synapse. It localises to the cell membrane. This is Transmembrane protein 240 (Tmem240) from Mus musculus (Mouse).